The sequence spans 154 residues: MRIIGIDPGLARVGYGIIDEIEGKKIMIDCGIIETKSTKKEEERLVEISNDLSSIIKKWNPNSAAVEKFFFYRSSTTISVVQARGVIMMTLGKYKLPIQEFPPMQIKLAVTGYGHSDKNEVLNCVMHELSITSPPKPDDAADALAIALTGIYLK.

Residues Asp-7, Glu-67, and Asp-139 contribute to the active site. Asp-7, Glu-67, and Asp-139 together coordinate Mg(2+).

Belongs to the RuvC family. In terms of assembly, homodimer which binds Holliday junction (HJ) DNA. The HJ becomes 2-fold symmetrical on binding to RuvC with unstacked arms; it has a different conformation from HJ DNA in complex with RuvA. In the full resolvosome a probable DNA-RuvA(4)-RuvB(12)-RuvC(2) complex forms which resolves the HJ. Mg(2+) is required as a cofactor.

The protein resides in the cytoplasm. It carries out the reaction Endonucleolytic cleavage at a junction such as a reciprocal single-stranded crossover between two homologous DNA duplexes (Holliday junction).. Functionally, the RuvA-RuvB-RuvC complex processes Holliday junction (HJ) DNA during genetic recombination and DNA repair. Endonuclease that resolves HJ intermediates. Cleaves cruciform DNA by making single-stranded nicks across the HJ at symmetrical positions within the homologous arms, yielding a 5'-phosphate and a 3'-hydroxyl group; requires a central core of homology in the junction. The consensus cleavage sequence is 5'-(A/T)TT(C/G)-3'. Cleavage occurs on the 3'-side of the TT dinucleotide at the point of strand exchange. HJ branch migration catalyzed by RuvA-RuvB allows RuvC to scan DNA until it finds its consensus sequence, where it cleaves and resolves the cruciform DNA. This chain is Crossover junction endodeoxyribonuclease RuvC, found in Prochlorococcus marinus (strain NATL1A).